A 480-amino-acid polypeptide reads, in one-letter code: Glycogen synthase (480 aa).

It belongs to the glycosyltransferase 1 family. Bacterial/plant glycogen synthase subfamily.

The catalysed reaction is [(1-&gt;4)-alpha-D-glucosyl](n) + ADP-alpha-D-glucose = [(1-&gt;4)-alpha-D-glucosyl](n+1) + ADP + H(+). It participates in glycan biosynthesis; glycogen biosynthesis. Functionally, synthesizes alpha-1,4-glucan chains using ADP-glucose. This chain is Glycogen synthase, found in Rhizobium etli (strain ATCC 51251 / DSM 11541 / JCM 21823 / NBRC 15573 / CFN 42).